Consider the following 443-residue polypeptide: Transcriptional adapter 2-alpha (443 aa).

Serine 6 is modified (phosphoserine). Residues 12-69 (SDKPPCRGCSSYLMEPYIKCAECGPPPFFLCLQCFTRGFEYKKHQSDHTYEIMTSDFP) form a ZZ-type zinc finger. 8 residues coordinate Zn(2+): cysteine 17, cysteine 20, cysteine 31, cysteine 34, cysteine 42, cysteine 45, histidine 55, and histidine 59. The SANT domain occupies 70–122 (VLDPSWTAQEEMALLEAVMDCGFGNWQDVANQMCTKTKEECEKHYMKHFINNP). Residues lysine 132 and lysine 138 each participate in a glycyl lysine isopeptide (Lys-Gly) (interchain with G-Cter in SUMO2) cross-link. The span at 347–359 (LSPSVPMTSNSGR) shows a compositional bias: polar residues. The tract at residues 347 to 372 (LSPSVPMTSNSGRRSAPPLNLTGLPG) is disordered. The region spanning 356–443 (NSGRRSAPPL…LIREGYITKA (88 aa)) is the SWIRM domain. A DNA-binding region spans residues 426 to 435 (KTRKIYDFLI).

Interacts with GCN5 and NR3C1. Associated with the P/CAF protein in the PCAF complex. Component of the PCAF complex, at least composed of TADA2L/ADA2, TADA3L/ADA3, TAF5L/PAF65-beta, TAF6L/PAF65-alpha, TAF10/TAFII30, TAF12/TAFII20, TAF9/TAFII31 and TRRAP. Component of the ADA2A-containing complex (ATAC), composed of KAT14, KAT2A, TADA2L, TADA3L, ZZ3, MBIP, WDR5, YEATS2, CCDC101 and DR1. Interacts with CCDC134.

Its subcellular location is the nucleus. It is found in the chromosome. In terms of biological role, component of the ATAC complex, a complex with histone acetyltransferase activity on histones H3 and H4. Required for the function of some acidic activation domains, which activate transcription from a distant site. Binds double-stranded DNA. Binds dinucleosomes, probably at the linker region between neighboring nucleosomes. Plays a role in chromatin remodeling. May promote TP53/p53 'Lys-321' acetylation, leading to reduced TP53 stability and transcriptional activity. May also promote XRCC6 acetylation thus facilitating cell apoptosis in response to DNA damage. The sequence is that of Transcriptional adapter 2-alpha (TADA2A) from Bos taurus (Bovine).